We begin with the raw amino-acid sequence, 343 residues long: Holliday junction branch migration complex subunit RuvB (343 aa).

Residues 1–186 (MVMARKSDTL…FQIQERLEYY (186 aa)) are large ATPase domain (RuvB-L). Residues Leu25, Arg26, Gly67, Lys70, Thr71, Ser72, 133–135 (EDF), Arg176, Tyr186, and Arg223 each bind ATP. Thr71 is a binding site for Mg(2+). A small ATPAse domain (RuvB-S) region spans residues 187-257 (DAKALESILH…LAQKSLDRLG (71 aa)). The interval 260-343 (ASGLDSMDRK…PPPTPQGSLF (84 aa)) is head domain (RuvB-H). DNA is bound by residues Arg296, Arg315, and Arg320.

This sequence belongs to the RuvB family. In terms of assembly, homohexamer. Forms an RuvA(8)-RuvB(12)-Holliday junction (HJ) complex. HJ DNA is sandwiched between 2 RuvA tetramers; dsDNA enters through RuvA and exits via RuvB. An RuvB hexamer assembles on each DNA strand where it exits the tetramer. Each RuvB hexamer is contacted by two RuvA subunits (via domain III) on 2 adjacent RuvB subunits; this complex drives branch migration. In the full resolvosome a probable DNA-RuvA(4)-RuvB(12)-RuvC(2) complex forms which resolves the HJ.

It localises to the cytoplasm. The catalysed reaction is ATP + H2O = ADP + phosphate + H(+). Functionally, the RuvA-RuvB-RuvC complex processes Holliday junction (HJ) DNA during genetic recombination and DNA repair, while the RuvA-RuvB complex plays an important role in the rescue of blocked DNA replication forks via replication fork reversal (RFR). RuvA specifically binds to HJ cruciform DNA, conferring on it an open structure. The RuvB hexamer acts as an ATP-dependent pump, pulling dsDNA into and through the RuvAB complex. RuvB forms 2 homohexamers on either side of HJ DNA bound by 1 or 2 RuvA tetramers; 4 subunits per hexamer contact DNA at a time. Coordinated motions by a converter formed by DNA-disengaged RuvB subunits stimulates ATP hydrolysis and nucleotide exchange. Immobilization of the converter enables RuvB to convert the ATP-contained energy into a lever motion, pulling 2 nucleotides of DNA out of the RuvA tetramer per ATP hydrolyzed, thus driving DNA branch migration. The RuvB motors rotate together with the DNA substrate, which together with the progressing nucleotide cycle form the mechanistic basis for DNA recombination by continuous HJ branch migration. Branch migration allows RuvC to scan DNA until it finds its consensus sequence, where it cleaves and resolves cruciform DNA. The polypeptide is Holliday junction branch migration complex subunit RuvB (Myxococcus xanthus (strain DK1622)).